The following is a 42-amino-acid chain: Large ribosomal subunit protein bL36 (42 aa).

This sequence belongs to the bacterial ribosomal protein bL36 family.

The protein is Large ribosomal subunit protein bL36 of Wolbachia pipientis wMel.